The primary structure comprises 652 residues: Na(+)/H(+) antiporter NhaA 3 (652 aa).

Residues 1-428 form a na(+)/H(+) antiporter NhaA region; it reads MTGEIPRGRR…GASLTTWLVF (428 aa). A run of 11 helical transmembrane segments spans residues 32–52, 78–98, 114–134, 142–162, 173–193, 200–220, 227–249, 306–326, 342–362, 376–396, and 411–431; these read ETGSARVLLAAAVVALAWVNL, LRFWVNSGLMTFFFLVIGLEV, MLPLLAGIGGILAPIAIYLAF, VGWGVVMATDTALALGMLAVL, FLLTVAVVDDLIVIVVLAIAY, MALFVAAGIFALVLLIRAAGV, LLLGVAAWLAVSESGVDPVVVGL, HPWASYLIVPLFALANVGVVV, GVLFAYVVGKPAGIVIASMLV, WAAIIGVGTVSGIGFTIALLI, and VGILVATVGASLTTWLVFRLA. In terms of domain architecture, Thioredoxin spans 429–623; it reads RLAARLAPAR…LSAAVMSAFA (195 aa). Residues 626–652 form a disordered region; that stretch reads RLRPEGGREPDHRSEAGSEQPDEEPGT. Residues 627–641 show a composition bias toward basic and acidic residues; that stretch reads LRPEGGREPDHRSEA.

The protein in the N-terminal section; belongs to the NhaA Na(+)/H(+) (TC 2.A.33) antiporter family.

Its subcellular location is the cell membrane. The catalysed reaction is Na(+)(in) + 2 H(+)(out) = Na(+)(out) + 2 H(+)(in). In terms of biological role, na(+)/H(+) antiporter that extrudes sodium in exchange for external protons. The protein is Na(+)/H(+) antiporter NhaA 3 of Salinispora tropica (strain ATCC BAA-916 / DSM 44818 / JCM 13857 / NBRC 105044 / CNB-440).